Reading from the N-terminus, the 520-residue chain is Probable methylmalonate-semialdehyde/malonate-semialdehyde dehydrogenase [acylating], mitochondrial (520 aa).

NAD(+)-binding residues include A169, F171, K195, E198, R199, and S248. Catalysis depends on C303, which acts as the Nucleophile. Residue E403 participates in NAD(+) binding.

The protein belongs to the aldehyde dehydrogenase family. Homotetramer.

It localises to the mitochondrion. The catalysed reaction is 2-methyl-3-oxopropanoate + NAD(+) + CoA + H2O = propanoyl-CoA + hydrogencarbonate + NADH + H(+). The enzyme catalyses 3-oxopropanoate + NAD(+) + CoA + H2O = hydrogencarbonate + acetyl-CoA + NADH + H(+). In terms of biological role, probable malonate and methylmalonate semialdehyde dehydrogenase involved in the catabolism of valine, thymine, and compounds catabolized by way of beta-alanine, including uracil and cytidine. This is Probable methylmalonate-semialdehyde/malonate-semialdehyde dehydrogenase [acylating], mitochondrial from Drosophila melanogaster (Fruit fly).